The following is a 674-amino-acid chain: Linear primary-alkylsulfatase (674 aa).

A signal peptide spans 1–41 (MKLNALSTATHGSRSSPVKLWKFSTSFLLAASIIVSGQSWA). Zn(2+)-binding residues include histidine 192, histidine 194, aspartate 196, histidine 197, glutamate 303, and glutamate 322. Sulfate-binding positions include 330 to 335 (NTYSLR) and arginine 340. Histidine 367 serves as a coordination point for Zn(2+). Tyrosine 428 lines the sulfate pocket.

This sequence belongs to the metallo-beta-lactamase superfamily. Type III sulfatase family. Homodimer. Requires Zn(2+) as cofactor.

The protein resides in the periplasm. It catalyses the reaction a primary linear alkyl sulfate ester + H2O = a primary alcohol + sulfate + H(+). Inhibited by EDTA. Slightly activated in the presence of Ca(2+). Alkylsulfatase that cleaves primary alkyl sulfates such as sodium octyl sulfate and the widely used detergent sodium dodecyl sulfate (SDS). This chain is Linear primary-alkylsulfatase, found in Pseudomonas sp.